The following is a 59-amino-acid chain: Small, acid-soluble spore protein H 2 (59 aa).

Belongs to the SspH family.

Its subcellular location is the spore core. The protein is Small, acid-soluble spore protein H 2 (sspH2) of Bacillus anthracis.